The primary structure comprises 363 residues: S-adenosylmethionine:tRNA ribosyltransferase-isomerase (363 aa).

It belongs to the QueA family. Monomer.

The protein resides in the cytoplasm. It catalyses the reaction 7-aminomethyl-7-carbaguanosine(34) in tRNA + S-adenosyl-L-methionine = epoxyqueuosine(34) in tRNA + adenine + L-methionine + 2 H(+). Its pathway is tRNA modification; tRNA-queuosine biosynthesis. Its function is as follows. Transfers and isomerizes the ribose moiety from AdoMet to the 7-aminomethyl group of 7-deazaguanine (preQ1-tRNA) to give epoxyqueuosine (oQ-tRNA). The protein is S-adenosylmethionine:tRNA ribosyltransferase-isomerase of Brucella anthropi (strain ATCC 49188 / DSM 6882 / CCUG 24695 / JCM 21032 / LMG 3331 / NBRC 15819 / NCTC 12168 / Alc 37) (Ochrobactrum anthropi).